The following is a 143-amino-acid chain: Large ribosomal subunit protein uL11 (143 aa).

The protein belongs to the universal ribosomal protein uL11 family. In terms of assembly, part of the ribosomal stalk of the 50S ribosomal subunit. Interacts with L10 and the large rRNA to form the base of the stalk. L10 forms an elongated spine to which L12 dimers bind in a sequential fashion forming a multimeric L10(L12)X complex. Post-translationally, one or more lysine residues are methylated.

Its function is as follows. Forms part of the ribosomal stalk which helps the ribosome interact with GTP-bound translation factors. This is Large ribosomal subunit protein uL11 from Marinobacter nauticus (strain ATCC 700491 / DSM 11845 / VT8) (Marinobacter aquaeolei).